The chain runs to 568 residues: MVLDPEEKIPDDGASGDHGDSASLGAINPAYSNSSLPHSTGDSEEPFTTYFDEKIPIPEEEYSCFSFRKLWAFTGPGFLMSIAYLDPGNIESDLQSGAVAGFKLLWVLLLATIVGLLLQRLAARLGVVTGLHLAEVCHRQYPKVPRIILWLMVELAIIGSDMQEVIGSAIAINLLSAGRVPLYGGVLITIADTFVFLFLDKYGLRKLEAFFGFLITIMALTFGYEYVTVKPSQSQVLRGMFVPSCSGCHTPQVEQAVGIVGAVIMPHNMYLHSALVKSRQVNRANKQEVREANKYFFIESCIALFVSFIINVFVVSVFAEAFFEKTNEQVVEVCRNSSSPHADLFPNDNSTLAVDIYKGGVVLGCYFGPAALYIWAVGILAAGQSSTMTGTYSGQFVMEGFLNLKWSRFARVILTRSIAIIPTLLVAVFQDVEHLTGMNDFLNVLQSLQLPFALIPILTFTSLRPVMSEFSNGIGWRIAGGILVLLVCSINMYFVVVYVQELGHVALYVVAAVVSVAYLGFVFYLGWQCLIALGLSFLDCGRSYHLGLTARPEIYLLNTVDAVSLVSR.

Residues 1 to 20 (MVLDPEEKIPDDGASGDHGD) are compositionally biased toward basic and acidic residues. The tract at residues 1–45 (MVLDPEEKIPDDGASGDHGDSASLGAINPAYSNSSLPHSTGDSEE) is disordered. Residues 1–69 (MVLDPEEKIP…EEYSCFSFRK (69 aa)) are Cytoplasmic-facing. Residues 30 to 40 (AYSNSSLPHST) are compositionally biased toward polar residues. The chain crosses the membrane as a helical span at residues 70 to 90 (LWAFTGPGFLMSIAYLDPGNI). Residues 91-95 (ESDLQ) lie on the Extracellular side of the membrane. Residues 96 to 117 (SGAVAGFKLLWVLLLATIVGLL) traverse the membrane as a helical segment. The Cytoplasmic portion of the chain corresponds to 118–154 (LQRLAARLGVVTGLHLAEVCHRQYPKVPRIILWLMVE). A helical transmembrane segment spans residues 155 to 175 (LAIIGSDMQEVIGSAIAINLL). Residues 176–179 (SAGR) lie on the Extracellular side of the membrane. The chain crosses the membrane as a helical span at residues 180 to 194 (VPLYGGVLITIADTF). The Cytoplasmic segment spans residues 195–208 (VFLFLDKYGLRKLE). The chain crosses the membrane as a helical span at residues 209–229 (AFFGFLITIMALTFGYEYVTV). Over 230–255 (KPSQSQVLRGMFVPSCSGCHTPQVEQ) the chain is Extracellular. A helical transmembrane segment spans residues 256–276 (AVGIVGAVIMPHNMYLHSALV). At 277 to 301 (KSRQVNRANKQEVREANKYFFIESC) the chain is on the cytoplasmic side. A helical membrane pass occupies residues 302–322 (IALFVSFIINVFVVSVFAEAF). Residues 323–360 (FEKTNEQVVEVCRNSSSPHADLFPNDNSTLAVDIYKGG) lie on the Extracellular side of the membrane. N-linked (GlcNAc...) asparagine glycans are attached at residues N336 and N349. A helical membrane pass occupies residues 361–381 (VVLGCYFGPAALYIWAVGILA). Topologically, residues 382–408 (AGQSSTMTGTYSGQFVMEGFLNLKWSR) are cytoplasmic. Residues 409–429 (FARVILTRSIAIIPTLLVAVF) traverse the membrane as a helical segment. At 430-440 (QDVEHLTGMND) the chain is on the extracellular side. A helical transmembrane segment spans residues 441–461 (FLNVLQSLQLPFALIPILTFT). Over 462 to 482 (SLRPVMSEFSNGIGWRIAGGI) the chain is Cytoplasmic. A helical membrane pass occupies residues 483 to 503 (LVLLVCSINMYFVVVYVQELG). Topologically, residues 504–506 (HVA) are extracellular. The helical transmembrane segment at 507-527 (LYVVAAVVSVAYLGFVFYLGW) threads the bilayer. The Cytoplasmic segment spans residues 528–568 (QCLIALGLSFLDCGRSYHLGLTARPEIYLLNTVDAVSLVSR). The segment at 555 to 559 (YLLNT) is required for early endosome targeting. L556, S564, and S567 each carry phosphoserine.

This sequence belongs to the NRAMP family. As to quaternary structure, forms a complex with NDFIP1 and NEDD4L, in cortical neurons, in response to iron and cobalt exposure; this interaction leads to SLC11A2 ubiquitination by NEDD4L and proteasome-dependent degradation. Interacts with NDFIP1, NDFIP2 and WWP2; this interaction leads to SLC11A2 ubiquitination by WWP2 and subsequent proteasome-dependent degradation. Interacts with COX2 and TOM6 at the outer mitochondrion membrane. Interacts with ARRDC1; this interaction regulates the incorporation of SLC11A2 into extracellular vesicles through an ubiquitination-dependent mechanism. Interacts with ARRDC4; controls the incorporation of SLC11A2 into extracellular vesicles through an ubiquitination-dependent mechanism. Ubiquitinated by WWP2. In terms of processing, N-glycosylated. Ubiquitous. In terms of tissue distribution, expressed in proximal intestine, kidney and brain.

The protein localises to the golgi apparatus. Its subcellular location is the trans-Golgi network membrane. The protein resides in the early endosome membrane. It localises to the recycling endosome membrane. It is found in the late endosome membrane. The protein localises to the lysosome membrane. Its subcellular location is the apical cell membrane. The protein resides in the mitochondrion outer membrane. It localises to the extracellular vesicle membrane. It catalyses the reaction Fe(2+)(in) + H(+)(in) = Fe(2+)(out) + H(+)(out). The catalysed reaction is Cd(2+)(out) + H(+)(out) = Cd(2+)(in) + H(+)(in). It carries out the reaction Co(2+)(out) + H(+)(out) = Co(2+)(in) + H(+)(in). The enzyme catalyses Mn(2+)(in) + H(+)(in) = Mn(2+)(out) + H(+)(out). It catalyses the reaction Zn(2+)(out) + H(+)(out) = Zn(2+)(in) + H(+)(in). The catalysed reaction is Ni(2+)(out) + H(+)(out) = Ni(2+)(in) + H(+)(in). It carries out the reaction H(+)(in) = H(+)(out). The enzyme catalyses Fe(2+)(in) = Fe(2+)(out). With respect to regulation, inhibited by 2-(3-carbamimidoylsulfanylmethyl-benzyl)-isothiourea. Proton-coupled metal ion symporter operating with a proton to metal ion stoichiometry of 1:1. Selectively transports various divalent metal cations, in decreasing affinity: Cd(2+) &gt; Fe(2+) &gt; Co(2+), Mn(2+) &gt;&gt; Zn(2+), Ni(2+), VO(2+). Essential for maintenance of iron homeostasis by modulating intestinal absorption of dietary Fe(2+) and TF-associated endosomal Fe(2+) transport in erythroid precursors and other cells. Enables Fe(2+) and Mn(2+) ion entry into mitochondria, and is thus expected to promote mitochondrial heme synthesis, iron-sulfur cluster biogenesis and antioxidant defense. Can mediate uncoupled fluxes of either protons or metal ions. This chain is Natural resistance-associated macrophage protein 2 (Slc11a2), found in Rattus norvegicus (Rat).